We begin with the raw amino-acid sequence, 288 residues long: Putative hydrolase LipZ (288 aa).

It belongs to the AB hydrolase superfamily.

The protein is Putative hydrolase LipZ of Mycobacterium tuberculosis (strain CDC 1551 / Oshkosh).